We begin with the raw amino-acid sequence, 258 residues long: UPF0246 protein Pnuc_0753 (258 aa).

It belongs to the UPF0246 family.

The polypeptide is UPF0246 protein Pnuc_0753 (Polynucleobacter asymbioticus (strain DSM 18221 / CIP 109841 / QLW-P1DMWA-1) (Polynucleobacter necessarius subsp. asymbioticus)).